Here is a 181-residue protein sequence, read N- to C-terminus: Translation initiation factor IF-3 (181 aa).

It belongs to the IF-3 family. Monomer.

The protein localises to the cytoplasm. Its function is as follows. IF-3 binds to the 30S ribosomal subunit and shifts the equilibrium between 70S ribosomes and their 50S and 30S subunits in favor of the free subunits, thus enhancing the availability of 30S subunits on which protein synthesis initiation begins. The protein is Translation initiation factor IF-3 of Cereibacter sphaeroides (strain ATCC 17023 / DSM 158 / JCM 6121 / CCUG 31486 / LMG 2827 / NBRC 12203 / NCIMB 8253 / ATH 2.4.1.) (Rhodobacter sphaeroides).